A 561-amino-acid polypeptide reads, in one-letter code: Dihydroxy-acid dehydratase (561 aa).

C51 lines the [2Fe-2S] cluster pocket. Position 83 (D83) interacts with Mg(2+). C124 contributes to the [2Fe-2S] cluster binding site. Positions 125 and 126 each coordinate Mg(2+). K126 carries the N6-carboxylysine modification. [2Fe-2S] cluster is bound at residue C196. A Mg(2+)-binding site is contributed by E447. The Proton acceptor role is filled by S473.

Belongs to the IlvD/Edd family. As to quaternary structure, homodimer. [2Fe-2S] cluster serves as cofactor. Requires Mg(2+) as cofactor.

The catalysed reaction is (2R)-2,3-dihydroxy-3-methylbutanoate = 3-methyl-2-oxobutanoate + H2O. It carries out the reaction (2R,3R)-2,3-dihydroxy-3-methylpentanoate = (S)-3-methyl-2-oxopentanoate + H2O. It functions in the pathway amino-acid biosynthesis; L-isoleucine biosynthesis; L-isoleucine from 2-oxobutanoate: step 3/4. It participates in amino-acid biosynthesis; L-valine biosynthesis; L-valine from pyruvate: step 3/4. Functions in the biosynthesis of branched-chain amino acids. Catalyzes the dehydration of (2R,3R)-2,3-dihydroxy-3-methylpentanoate (2,3-dihydroxy-3-methylvalerate) into 2-oxo-3-methylpentanoate (2-oxo-3-methylvalerate) and of (2R)-2,3-dihydroxy-3-methylbutanoate (2,3-dihydroxyisovalerate) into 2-oxo-3-methylbutanoate (2-oxoisovalerate), the penultimate precursor to L-isoleucine and L-valine, respectively. This Oceanobacillus iheyensis (strain DSM 14371 / CIP 107618 / JCM 11309 / KCTC 3954 / HTE831) protein is Dihydroxy-acid dehydratase.